A 402-amino-acid chain; its full sequence is MEGSDFILVVDSSVEEQVEELAMYLDNLEANTDKNVLALCREYLASENVKEVLNLFLTRLPLLAQAPEKELEPILAVFINLIQESAAFEDHVSKFCQALEQIADQNNNLTPAILSVLSILFNTAVKERQHARLSILTSVVTLTTRYSLFSTLAPNLKYFPDWLKEAGVSVSDHRAFNIFVSKAIQSYDDEQSFAFLLEAVKMDNSTADEAVRELVQRAVNSPKYFFFDDIVTLPPVQQLEQSTLQLLGILSGGMTDDYVSWVAENHAHCQHQKFDEDAIARKMKLLTIASLATQAPNNTLSYGDVAKSLKIDENEVELWIIDVIRAGLVEGRMSQLTKTLSIHRSSYRVFGKHEWVALHEKLAKWGSSLRYMLQVMEQPLSSFTIASSKKGNRDGSAVTASE.

In terms of domain architecture, PCI spans 188–347 (DDEQSFAFLL…KTLSIHRSSY (160 aa)).

Belongs to the eIF-3 subunit M family. In terms of assembly, component of the eukaryotic translation initiation factor 3 (eIF-3) complex. The eIF-3 complex appears to include tif32/eif3a, SPAC25G10.08/eif3b, tif33/eif3c, SPBC4C3.07/eif3f, tif35/eif3g and sum1/eif3i. This set of common subunits may also associate exclusively with either moe1/eif3d and int6/eif3e, or with SPAC821.05/eif3h and SPAC1751.03/eif3m. The eIF-3 complex may also include SPAC3A12.13c/eif3j.

Its subcellular location is the cytoplasm. Component of the eukaryotic translation initiation factor 3 (eIF-3) complex, which is involved in protein synthesis of a specialized repertoire of mRNAs and, together with other initiation factors, stimulates binding of mRNA and methionyl-tRNAi to the 40S ribosome. The eIF-3 complex specifically targets and initiates translation of a subset of mRNAs involved in cell proliferation. This chain is Eukaryotic translation initiation factor 3 subunit M (eif3m), found in Schizosaccharomyces pombe (strain 972 / ATCC 24843) (Fission yeast).